The primary structure comprises 164 residues: Protein phosphatase 1 regulatory subunit 14C (164 aa).

Over residues 1-19 the composition is skewed to gly residues; the sequence is MSVVTGGGEAAGGGGGGGA. The segment at 1–70 is disordered; it reads MSVVTGGGEA…QQQRRHQQGK (70 aa). Ser-2 carries the post-translational modification N-acetylserine. The residue at position 25 (Ser-25) is a Phosphoserine. Position 27 is an omega-N-methylarginine (Arg-27). Ser-33 carries the post-translational modification Phosphoserine. The span at 50–62 shows a compositional bias: low complexity; sequence VTTVAAAGQVQQQ. Thr-72 is modified (phosphothreonine; by ILK1).

It belongs to the PP1 inhibitor family. Post-translationally, the main inhibitory site appears to be Thr-72. Has over 600-fold higher inhibitory activity when phosphorylated, creating a molecular switch for regulating the phosphorylation status of PPP1CA substrates and smooth muscle contraction. Detected in heart, muscle, spinal cord, hippocampus, hypothalamus, thalamus, midbrain, brain stem, cerebellum, brain cortex and olfactory bulb.

The protein localises to the endomembrane system. Its function is as follows. Inhibitor of the PP1 regulatory subunit PPP1CA. The chain is Protein phosphatase 1 regulatory subunit 14C (Ppp1r14c) from Mus musculus (Mouse).